The chain runs to 112 residues: Evasin P1095 (112 aa).

A signal peptide spans 1-23 (MELNAFTILQIAVFIAVGYHANT). 3 disulfides stabilise this stretch: Cys-48–Cys-66, Cys-52–Cys-68, and Cys-62–Cys-79. Asn-51 carries N-linked (GlcNAc...) asparagine glycosylation. Residues 89 to 112 (GDPNDDPKINEATPQTQIFEKKRK) form a disordered region.

The protein localises to the secreted. Its function is as follows. Salivary chemokine-binding protein which binds to host chemokine CXCL8. The polypeptide is Evasin P1095 (Ixodes ricinus (Common tick)).